Reading from the N-terminus, the 279-residue chain is Ribosomal RNA small subunit methyltransferase A (279 aa).

S-adenosyl-L-methionine is bound by residues asparagine 27, leucine 29, glycine 54, glutamate 76, aspartate 102, and asparagine 127.

Belongs to the class I-like SAM-binding methyltransferase superfamily. rRNA adenine N(6)-methyltransferase family. RsmA subfamily.

It localises to the cytoplasm. The enzyme catalyses adenosine(1518)/adenosine(1519) in 16S rRNA + 4 S-adenosyl-L-methionine = N(6)-dimethyladenosine(1518)/N(6)-dimethyladenosine(1519) in 16S rRNA + 4 S-adenosyl-L-homocysteine + 4 H(+). In terms of biological role, specifically dimethylates two adjacent adenosines (A1518 and A1519) in the loop of a conserved hairpin near the 3'-end of 16S rRNA in the 30S particle. May play a critical role in biogenesis of 30S subunits. In Mesorhizobium japonicum (strain LMG 29417 / CECT 9101 / MAFF 303099) (Mesorhizobium loti (strain MAFF 303099)), this protein is Ribosomal RNA small subunit methyltransferase A.